The chain runs to 392 residues: DNA-directed RNA polymerase subunit Rpo1C (392 aa).

The protein belongs to the RNA polymerase beta' chain family. As to quaternary structure, part of the 13-subunit RNA polymerase complex.

It is found in the cytoplasm. The enzyme catalyses RNA(n) + a ribonucleoside 5'-triphosphate = RNA(n+1) + diphosphate. Functionally, DNA-dependent RNA polymerase (RNAP) catalyzes the transcription of DNA into RNA using the four ribonucleoside triphosphates as substrates. Forms part of the jaw domain. In Saccharolobus solfataricus (strain ATCC 35092 / DSM 1617 / JCM 11322 / P2) (Sulfolobus solfataricus), this protein is DNA-directed RNA polymerase subunit Rpo1C.